We begin with the raw amino-acid sequence, 315 residues long: Olfactory receptor 3A1 (315 aa).

Over 1-28 (MQPESGANGTVIAEFILLGLLEAPGLQP) the chain is Extracellular. Residue N8 is glycosylated (N-linked (GlcNAc...) asparagine). A helical transmembrane segment spans residues 29–52 (VVFVLFLFAYLVTVGGNLSILAAV). The Cytoplasmic portion of the chain corresponds to 53–60 (LVEPKLHS). A helical membrane pass occupies residues 61-82 (PMYFFLGNLSVLDVGCISVTVP). The Extracellular portion of the chain corresponds to 83 to 103 (SMLSRLLSRKRAVPCGACLTQ). C100 and C192 are joined by a disulfide. A helical membrane pass occupies residues 104–123 (LFFFHLFVGVDCFLLTAMAY). Residues 124–143 (DRFLAICRPLTYSTRMSQTV) are Cytoplasmic-facing. A helical transmembrane segment spans residues 144–161 (QRMLVAASWACAFTNALT). Residues 162–199 (HTVAMSTLNFCGPNEVNHFYCDLPQLFQLSCSSTQLNE) lie on the Extracellular side of the membrane. A helical transmembrane segment spans residues 200–223 (LLLFAVGFIMAGTPMALIVISYIH). Residues 224–240 (VAAAVLRIRSVEGRKKA) lie on the Cytoplasmic side of the membrane. Residues 241–264 (FSTCGSHLTVVAMFYGSGIFNYMR) form a helical membrane-spanning segment. Residues 265–275 (LGSTKLSDKDK) are Extracellular-facing. The helical transmembrane segment at 276–295 (AVGIFNTVINPMVNPIIYRF) threads the bilayer. The Cytoplasmic segment spans residues 296–315 (RNPEVQSAIWRMLTGRRSLA).

Belongs to the G-protein coupled receptor 1 family.

It is found in the cell membrane. Its function is as follows. Odorant receptor. This is Olfactory receptor 3A1 (OR3A1) from Pan troglodytes (Chimpanzee).